Reading from the N-terminus, the 613-residue chain is Dihydroxy-acid dehydratase (613 aa).

Asp81 lines the Mg(2+) pocket. [2Fe-2S] cluster is bound at residue Cys122. Residues Asp123 and Lys124 each contribute to the Mg(2+) site. An N6-carboxylysine modification is found at Lys124. Position 195 (Cys195) interacts with [2Fe-2S] cluster. Glu491 provides a ligand contact to Mg(2+). Ser517 serves as the catalytic Proton acceptor.

The protein belongs to the IlvD/Edd family. Homodimer. [2Fe-2S] cluster is required as a cofactor. Requires Mg(2+) as cofactor.

The enzyme catalyses (2R)-2,3-dihydroxy-3-methylbutanoate = 3-methyl-2-oxobutanoate + H2O. It catalyses the reaction (2R,3R)-2,3-dihydroxy-3-methylpentanoate = (S)-3-methyl-2-oxopentanoate + H2O. It functions in the pathway amino-acid biosynthesis; L-isoleucine biosynthesis; L-isoleucine from 2-oxobutanoate: step 3/4. It participates in amino-acid biosynthesis; L-valine biosynthesis; L-valine from pyruvate: step 3/4. In terms of biological role, functions in the biosynthesis of branched-chain amino acids. Catalyzes the dehydration of (2R,3R)-2,3-dihydroxy-3-methylpentanoate (2,3-dihydroxy-3-methylvalerate) into 2-oxo-3-methylpentanoate (2-oxo-3-methylvalerate) and of (2R)-2,3-dihydroxy-3-methylbutanoate (2,3-dihydroxyisovalerate) into 2-oxo-3-methylbutanoate (2-oxoisovalerate), the penultimate precursor to L-isoleucine and L-valine, respectively. This Buchnera aphidicola subsp. Melaphis rhois protein is Dihydroxy-acid dehydratase.